The following is a 123-amino-acid chain: Small ribosomal subunit protein uS13 (123 aa).

Positions 97–123 (PVRGQRTKTNARTRKGPRKTVGVRRKK) are disordered.

It belongs to the universal ribosomal protein uS13 family. As to quaternary structure, part of the 30S ribosomal subunit. Forms a loose heterodimer with protein S19. Forms two bridges to the 50S subunit in the 70S ribosome.

Functionally, located at the top of the head of the 30S subunit, it contacts several helices of the 16S rRNA. In the 70S ribosome it contacts the 23S rRNA (bridge B1a) and protein L5 of the 50S subunit (bridge B1b), connecting the 2 subunits; these bridges are implicated in subunit movement. Contacts the tRNAs in the A and P-sites. The chain is Small ribosomal subunit protein uS13 from Pelotomaculum thermopropionicum (strain DSM 13744 / JCM 10971 / SI).